The chain runs to 352 residues: Ion-translocating oxidoreductase complex subunit D (352 aa).

The next 4 helical transmembrane spans lie at 20-40, 42-62, 89-109, and 123-143; these read IMLL…CFFG, GTLV…ALVL, IPPL…VIIA, and PAMI…TSWL. Threonine 187 is modified (FMN phosphoryl threonine). Transmembrane regions (helical) follow at residues 215-235, 242-262, 267-287, 301-321, and 322-342; these read LAGA…VWLL, WHIP…GWLF, LAAP…FFIL, LIFG…GGYP, and DGVA…DYYT.

Belongs to the NqrB/RnfD family. The complex is composed of six subunits: RsxA, RsxB, RsxC, RsxD, RsxE and RsxG. FMN is required as a cofactor.

The protein localises to the cell inner membrane. In terms of biological role, part of a membrane-bound complex that couples electron transfer with translocation of ions across the membrane. Required to maintain the reduced state of SoxR. This chain is Ion-translocating oxidoreductase complex subunit D, found in Escherichia coli O7:K1 (strain IAI39 / ExPEC).